Consider the following 457-residue polypeptide: MMEGQQHGEQLKRGLKNRHIQLIALGGAIGTGLFLGSASVIQSAGPGIILGYAIAGFIAFLIMRQLGEMVVEEPVAGSFSHFAYKYWGSFAGFASGWNYWVLYVLVAMAELTAVGKYIQFWYPEIPTWVSAAVFFVVINAINLTNVTVFGEMEFWFAIIKVIAVVAMIIFGGWLLFSGNGGPQASVSNLWDQGGFLPHGFTGLVMMMAIIMFSFGGLELVGITAAEADNPEQSIPKATNQVIYRILIFYIGSLAVLLSLMPWTRVTADTSPFVLIFHELGDTFVANALNIVVLTAALSVYNSCVYCNSRMLFGLAQQGNAPKALASVDKRGVPVNTILVSALVTALCVLINYLAPESAFGLLMALVVSALVINWAMISLAHMKFRRAKQEQGVVTRFPALLYPLGNWICLLFMAVVLVIMLMTPGMAISVYLIPVWLVVLGIGYLFKEKTAKAVKAH.

Residues 1–19 (MMEGQQHGEQLKRGLKNRH) lie on the Cytoplasmic side of the membrane. Residues 20 to 40 (IQLIALGGAIGTGLFLGSASV) traverse the membrane as a helical segment. Residues 41–42 (IQ) are Periplasmic-facing. Residues 43–63 (SAGPGIILGYAIAGFIAFLIM) form a helical membrane-spanning segment. The Cytoplasmic portion of the chain corresponds to 64 to 86 (RQLGEMVVEEPVAGSFSHFAYKY). Residues 87–107 (WGSFAGFASGWNYWVLYVLVA) form a helical membrane-spanning segment. Over 108 to 117 (MAELTAVGKY) the chain is Periplasmic. The chain crosses the membrane as a helical span at residues 118-138 (IQFWYPEIPTWVSAAVFFVVI). The Cytoplasmic segment spans residues 139 to 155 (NAINLTNVTVFGEMEFW). The helical transmembrane segment at 156–176 (FAIIKVIAVVAMIIFGGWLLF) threads the bilayer. At 177 to 201 (SGNGGPQASVSNLWDQGGFLPHGFT) the chain is on the periplasmic side. The chain crosses the membrane as a helical span at residues 202 to 222 (GLVMMMAIIMFSFGGLELVGI). Topologically, residues 223-240 (TAAEADNPEQSIPKATNQ) are cytoplasmic. Residues 241–261 (VIYRILIFYIGSLAVLLSLMP) traverse the membrane as a helical segment. The Periplasmic segment spans residues 262 to 271 (WTRVTADTSP). Residues 272-292 (FVLIFHELGDTFVANALNIVV) traverse the membrane as a helical segment. The Cytoplasmic portion of the chain corresponds to 293-333 (LTAALSVYNSCVYCNSRMLFGLAQQGNAPKALASVDKRGVP). A helical transmembrane segment spans residues 334 to 354 (VNTILVSALVTALCVLINYLA). Topologically, residues 355–358 (PESA) are periplasmic. The helical transmembrane segment at 359–379 (FGLLMALVVSALVINWAMISL) threads the bilayer. Residues 380–407 (AHMKFRRAKQEQGVVTRFPALLYPLGNW) are Cytoplasmic-facing. Residues 408–428 (ICLLFMAVVLVIMLMTPGMAI) traverse the membrane as a helical segment. Residue Ser-429 is a topological domain, periplasmic. Residues 430 to 450 (VYLIPVWLVVLGIGYLFKEKT) traverse the membrane as a helical segment. Residues 451–457 (AKAVKAH) lie on the Cytoplasmic side of the membrane.

Belongs to the amino acid-polyamine-organocation (APC) superfamily. Amino acid transporter (AAT) (TC 2.A.3.1) family.

It localises to the cell inner membrane. The enzyme catalyses L-phenylalanine(in) + H(+)(in) = L-phenylalanine(out) + H(+)(out). The catalysed reaction is L-tryptophan(in) + H(+)(in) = L-tryptophan(out) + H(+)(out). It catalyses the reaction L-tyrosine(in) + H(+)(in) = L-tyrosine(out) + H(+)(out). In terms of biological role, permease that is involved in the active transport across the cytoplasmic membrane of all three aromatic amino acids, phenylalanine, tyrosine and tryptophan. This is Aromatic amino acid transport protein AroP (aroP) from Escherichia coli O157:H7.